The following is a 137-amino-acid chain: BolA-like protein 1 (137 aa).

The residue at position 81 (Ser81) is a Phosphoserine. The segment at 114–137 is disordered; it reads WGENSQLDTSPPCLGGNKKTLGTP.

This sequence belongs to the BolA/IbaG family. As to quaternary structure, interacts with GLRX5.

The protein resides in the mitochondrion. Acts as a mitochondrial iron-sulfur (Fe-S) cluster assembly factor that facilitates (Fe-S) cluster insertion into a subset of mitochondrial proteins. Probably acts together with the monothiol glutaredoxin GLRX5. May protect cells against oxidative stress. This is BolA-like protein 1 (BOLA1) from Pongo abelii (Sumatran orangutan).